A 466-amino-acid chain; its full sequence is MSIATVAQAKDVRGLNLVAAHSHITGLGLEPNSLTPKENAQGMVGQVKARRAAAVVLQMIKDGKIAGRSVLLAGPPSTGKTAIAMGISQSLGSDVPFTSLAGSEIYSLELSKTEALNQAFRKSIGVRIKETTDIIEGEVVEIQIDRSLSGGHKQGKLTIKTTDMETIYDLGHKMIDSLSNEKVTAGDVISIDKASGRITKLGRSFARARDYDALGADTKFVQCPEGELQQRKEVIHTVSLHEIDVINSRSQGFLALFSGDTGEIRPEVREQINTKVAEWKEEGKAEIVPGVLFIDEVHMLDMECFSFINRALEDDMAPIVIMATNRGQSTTRGTDYKSPHGLPVDLLDRVIIIPTSPYSPDEVKQILQIRANEEEVELSPEALEILTSIGADTSLRYGSNLISVSHMLAQKRKASSVGLEDVKRAYSLFLDTARSVQFLSSSNNYVGEDGTAKLGEREKDAMDTSA.

Position 74–81 (74–81 (GPPSTGKT)) interacts with ATP.

This sequence belongs to the RuvB family. As to quaternary structure, may form heterododecamers with RVB1. Component of the SWR1 chromatin remodeling complex, the INO80 chromatin remodeling complex, and of the R2TP complex.

Its subcellular location is the nucleus. It carries out the reaction ATP + H2O = ADP + phosphate + H(+). Functionally, DNA helicase which participates in several chromatin remodeling complexes, including the SWR1 and the INO80 complexes. The SWR1 complex mediates the ATP-dependent exchange of histone H2A for the H2A variant HZT1 leading to transcriptional regulation of selected genes by chromatin remodeling. The INO80 complex remodels chromatin by shifting nucleosomes and is involved in DNA repair. Also involved in pre-rRNA processing. This Yarrowia lipolytica (strain CLIB 122 / E 150) (Yeast) protein is RuvB-like helicase 2 (RVB2).